Reading from the N-terminus, the 323-residue chain is D-alanine--D-alanine ligase (323 aa).

Positions 120–319 constitute an ATP-grasp domain; the sequence is LSVLKPYGIK…LEDLFTNAIE (200 aa). 148 to 203 is a binding site for ATP; that stretch reads VKKVGLPCFVKPNKAGSSFGISKVKSEAELPIAIEVAYKEDNEIIIESFLDGTEVS. Residues Glu274, Glu286, and Asn288 each contribute to the Mg(2+) site.

Belongs to the D-alanine--D-alanine ligase family. Mg(2+) is required as a cofactor. Mn(2+) serves as cofactor.

The protein resides in the cytoplasm. The enzyme catalyses 2 D-alanine + ATP = D-alanyl-D-alanine + ADP + phosphate + H(+). It participates in cell wall biogenesis; peptidoglycan biosynthesis. Cell wall formation. The sequence is that of D-alanine--D-alanine ligase from Flavobacterium johnsoniae (strain ATCC 17061 / DSM 2064 / JCM 8514 / BCRC 14874 / CCUG 350202 / NBRC 14942 / NCIMB 11054 / UW101) (Cytophaga johnsonae).